The following is a 298-amino-acid chain: ADP/ATP translocase 2 (298 aa).

An N-acetylmethionine modification is found at methionine 1. Topologically, residues 1–7 (MTDAAVS) are mitochondrial intermembrane. Threonine 2 carries the post-translational modification N-acetylthreonine; in ADP/ATP translocase 2, N-terminally processed. One copy of the Solcar 1 repeat lies at 6 to 98 (VSFAKDFLAG…FAFKDKYKQI (93 aa)). Serine 7 carries the post-translational modification Phosphoserine. The helical transmembrane segment at 8–37 (FAKDFLAGGVAAAISKTAVAPIERVKLLLQ) threads the bilayer. An N6-malonyllysine modification is found at lysine 23. Residues 38-74 (VQHASKQITADKQYKGIIDCVVRIPKEQGVLSFWRGN) are Mitochondrial matrix-facing. At lysine 43 the chain carries N6-succinyllysine. Position 52 is an N6,N6,N6-trimethyllysine; alternate (lysine 52). The residue at position 52 (lysine 52) is an N6,N6-dimethyllysine; alternate. An N6-methyllysine; alternate modification is found at lysine 52. The chain crosses the membrane as a helical span at residues 75–99 (LANVIRYFPTQALNFAFKDKYKQIF). The ADP site is built by arginine 80 and lysine 92. 2 positions are modified to N6-malonyllysine: lysine 92 and lysine 96. The Mitochondrial intermembrane segment spans residues 100 to 109 (LGGVDKRTQF). An N6-acetyllysine; alternate modification is found at lysine 105. An N6-succinyllysine; alternate modification is found at lysine 105. The helical transmembrane segment at 110 to 130 (WRYFAGNLASGGAAGATSLCF) threads the bilayer. Solcar repeat units lie at residues 111-201 (RYFA…AKGM) and 212-297 (ISWM…IKKF). Over 131–178 (VYPLDFARTRLAADVGKAGAEREFRGLGDCLVKIYKSDGIRGLYQGFN) the chain is Mitochondrial matrix. Lysine 147 bears the N6-methyllysine; alternate mark. Lysine 147 carries the post-translational modification N6-acetyllysine; alternate. Lysine 147 is subject to N6-succinyllysine; alternate. Lysine 147 carries the post-translational modification N6-malonyllysine; alternate. 2 positions are modified to N6-acetyllysine: lysine 163 and lysine 166. A helical membrane pass occupies residues 179–199 (VSVQGIIIYRAAYFGIYDTAK). The Mitochondrial intermembrane portion of the chain corresponds to 200-210 (GMLPDPKNTHI). The chain crosses the membrane as a helical span at residues 211-231 (FISWMIAQSVTAVAGLTSYPF). Residues 232–273 (DTVRRRMMMQSGRKGTDIMYTGTLDCWRKIARDEGAKAFFKG) are Mitochondrial matrix-facing. Arginine 235 contacts ADP. The interval 235 to 240 (RRRMMM) is important for transport activity. The short motif at 235–240 (RRRMMM) is the Nucleotide carrier signature motif element. Lysine 268 is subject to N6-acetyllysine; alternate. The residue at position 268 (lysine 268) is an N6-succinyllysine; alternate. The helical transmembrane segment at 274-291 (AWSNVLRGMGGAFVLVLY) threads the bilayer. Residues 292–298 (DEIKKFT) lie on the Mitochondrial intermembrane side of the membrane.

The protein belongs to the mitochondrial carrier (TC 2.A.29) family. Monomer. Component of the MMXD complex, which includes CIAO1, ERCC2, CIAO2B, MMS19 and SLC25A5/ANT2. Interacts with AK4. Interacts with TIMM44; leading to inhibit the presequence translocase TIMM23, thereby promoting stabilization of PINK1. Post-translationally, trimethylated by ANTKMT at Lys-52.

It is found in the mitochondrion inner membrane. Its subcellular location is the membrane. The enzyme catalyses ADP(in) + ATP(out) = ADP(out) + ATP(in). The catalysed reaction is H(+)(in) = H(+)(out). Its activity is regulated as follows. The matrix-open state (m-state) is inhibited by the membrane-permeable bongkrekic acid (BKA). The cytoplasmic-open state (c-state) is inhibited by the membrane-impermeable toxic inhibitor carboxyatractyloside (CATR). Proton transporter activity is inhibited by ADP:ATP antiporter activity. ADP:ATP antiporter that mediates import of ADP into the mitochondrial matrix for ATP synthesis, and export of ATP out to fuel the cell. Cycles between the cytoplasmic-open state (c-state) and the matrix-open state (m-state): operates by the alternating access mechanism with a single substrate-binding site intermittently exposed to either the cytosolic (c-state) or matrix (m-state) side of the inner mitochondrial membrane. In addition to its ADP:ATP antiporter activity, also involved in mitochondrial uncoupling and mitochondrial permeability transition pore (mPTP) activity. Plays a role in mitochondrial uncoupling by acting as a proton transporter: proton transport uncouples the proton flows via the electron transport chain and ATP synthase to reduce the efficiency of ATP production and cause mitochondrial thermogenesis. Proton transporter activity is inhibited by ADP:ATP antiporter activity, suggesting that SLC25A5/ANT2 acts as a master regulator of mitochondrial energy output by maintaining a delicate balance between ATP production (ADP:ATP antiporter activity) and thermogenesis (proton transporter activity). Proton transporter activity requires free fatty acids as cofactor, but does not transport it. Probably mediates mitochondrial uncoupling in tissues that do not express UCP1. Also plays a key role in mPTP opening, a non-specific pore that enables free passage of the mitochondrial membranes to solutes of up to 1.5 kDa, and which contributes to cell death. It is however unclear if SLC25A5/ANT2 constitutes a pore-forming component of mPTP or regulates it. Acts as a regulator of mitophagy independently of ADP:ATP antiporter activity: promotes mitophagy via interaction with TIMM44, leading to inhibit the presequence translocase TIMM23, thereby promoting stabilization of PINK1. As part of the mitotic spindle-associated MMXD complex it may play a role in chromosome segregation. The protein is ADP/ATP translocase 2 of Bos taurus (Bovine).